The following is a 506-amino-acid chain: Histidine ammonia-lyase (506 aa).

Residues 143–145 constitute a cross-link (5-imidazolinone (Ala-Gly)); that stretch reads ASG. S144 carries the post-translational modification 2,3-didehydroalanine (Ser).

It belongs to the PAL/histidase family. In terms of processing, contains an active site 4-methylidene-imidazol-5-one (MIO), which is formed autocatalytically by cyclization and dehydration of residues Ala-Ser-Gly.

The protein resides in the cytoplasm. The enzyme catalyses L-histidine = trans-urocanate + NH4(+). It functions in the pathway amino-acid degradation; L-histidine degradation into L-glutamate; N-formimidoyl-L-glutamate from L-histidine: step 1/3. The chain is Histidine ammonia-lyase from Salmonella typhimurium (strain LT2 / SGSC1412 / ATCC 700720).